The following is a 276-amino-acid chain: Large ribosomal subunit protein uL2c (276 aa).

Residues 225 to 256 (NPVDHPHGGGEGRSPIGRPKPVSPWGKTALGA) form a disordered region.

This sequence belongs to the universal ribosomal protein uL2 family. As to quaternary structure, part of the 50S ribosomal subunit.

It is found in the plastid. Its subcellular location is the chloroplast. This chain is Large ribosomal subunit protein uL2c (rpl2), found in Mesostigma viride (Green alga).